A 483-amino-acid chain; its full sequence is NADH-quinone oxidoreductase subunit N (483 aa).

The next 13 helical transmembrane spans lie at 11–31 (ALPE…DLFL), 37–57 (SLIY…TACT), 82–100 (LMMY…QYVS), 110–130 (FALT…QHFL), 164–184 (FVLG…LYGV), 205–225 (AVLV…LGAV), 239–259 (PTAV…AFMI), 268–288 (VLAI…ILIG), 301–321 (MLAY…MSAG), 329–349 (MFYI…MLLL), 372–392 (YAFL…TLGF), 406–426 (GFVG…FYYL), and 446–466 (PIDM…LGMF).

The protein belongs to the complex I subunit 2 family. NDH-1 is composed of 14 different subunits. Subunits NuoA, H, J, K, L, M, N constitute the membrane sector of the complex.

It is found in the cell inner membrane. The catalysed reaction is a quinone + NADH + 5 H(+)(in) = a quinol + NAD(+) + 4 H(+)(out). Its function is as follows. NDH-1 shuttles electrons from NADH, via FMN and iron-sulfur (Fe-S) centers, to quinones in the respiratory chain. The immediate electron acceptor for the enzyme in this species is believed to be ubiquinone. Couples the redox reaction to proton translocation (for every two electrons transferred, four hydrogen ions are translocated across the cytoplasmic membrane), and thus conserves the redox energy in a proton gradient. The sequence is that of NADH-quinone oxidoreductase subunit N from Methylovorus glucosotrophus (strain SIP3-4).